Consider the following 233-residue polypeptide: Small ribosomal subunit protein uS2 (233 aa).

This sequence belongs to the universal ribosomal protein uS2 family.

This is Small ribosomal subunit protein uS2 from Prochlorococcus marinus (strain MIT 9312).